The chain runs to 131 residues: GATA zinc finger domain-containing protein 2 (131 aa).

Over residues 21–55 the composition is skewed to low complexity; it reads STATDATSADGAASETDAASATDTTSATDPTSATD. Residues 21-85 are disordered; it reads STATDATSAD…RGRPYISTPP (65 aa). Over residues 57 to 74 the composition is skewed to polar residues; that stretch reads IATTNTTGITSSGPTTNG. A GATA-type zinc finger spans residues 88 to 115; the sequence is CYDCGRTRSPYWRKGTYNGQVVHLCNAC.

This Dictyostelium discoideum (Social amoeba) protein is GATA zinc finger domain-containing protein 2 (comH).